Consider the following 247-residue polypeptide: Chymase (247 aa).

Positions 1 to 19 (MHLLTLHLLLLLLGSSTKA) are cleaved as a signal peptide. Positions 20–21 (GE) are cleaved as a propeptide — activation peptide. One can recognise a Peptidase S1 domain in the interval 22 to 245 (IIGGTECIPH…YRPWINKILR (224 aa)). Cysteine 51 and cysteine 67 are joined by a disulfide. The active-site Charge relay system is histidine 66. Asparagine 80 carries an N-linked (GlcNAc...) asparagine glycan. The active-site Charge relay system is aspartate 110. 2 disulfide bridges follow: cysteine 144–cysteine 209 and cysteine 175–cysteine 188. Serine 203 acts as the Charge relay system in catalysis.

Belongs to the peptidase S1 family. Granzyme subfamily. As to expression, mast cells.

The protein resides in the secreted. Its subcellular location is the cytoplasmic granule. It catalyses the reaction Preferential cleavage: Phe-|-Xaa &gt; Tyr-|-Xaa &gt; Trp-|-Xaa &gt; Leu-|-Xaa.. In terms of biological role, major secreted protease of mast cells with suspected roles in vasoactive peptide generation, extracellular matrix degradation, and regulation of gland secretion. In Mus musculus (Mouse), this protein is Chymase (Cma1).